The sequence spans 354 residues: Vanillate O-demethylase oxygenase subunit (354 aa).

The Rieske domain maps to 7 to 107; that stretch reads WYVACTPDEI…VEERYGFIWV (101 aa). [2Fe-2S] cluster is bound by residues C47, H49, C66, and H69.

It belongs to the bacterial ring-hydroxylating dioxygenase alpha subunit family. This demethylase system consists of two proteins: an oxygenase and an oxygenase reductase. The cofactor is [2Fe-2S] cluster. Requires Fe cation as cofactor.

It carries out the reaction vanillate + NADH + O2 + H(+) = 3,4-dihydroxybenzoate + formaldehyde + NAD(+) + H2O. The protein operates within xenobiotic degradation; vanillyl-alcohol degradation. In Pseudomonas sp. (strain HR199 / DSM 7063), this protein is Vanillate O-demethylase oxygenase subunit (vanA).